The sequence spans 251 residues: Mycofactocin precursor peptide peptidase (251 aa).

Residues Glu38, His40, Asp49, His128, and Glu167 each coordinate a divalent metal cation.

This sequence belongs to the creatininase superfamily. In terms of assembly, homooctamer. The cofactor is Fe(2+). Zn(2+) serves as cofactor.

It catalyses the reaction [mycofactocin precursor peptide]-C-terminal glycyl-N-{5-[(4-hydroxyphenyl)methyl]-4,4-dimethyl-2-oxopyrrolidin-3-yl}acetamide + H2O = [mycofactocin precursor peptide]-C-terminal glycine + 3-amino-5-[(4-hydroxyphenyl)methyl]-4,4-dimethyl-2-pyrrolidin-2-one. In terms of biological role, peptidase involved in the biosynthesis of the enzyme cofactor mycofactocin (MFT). Catalyzes cleavage of the MftC-modified MftA peptide to liberate its final two residues, which consist of a cross-linked valine-decarboxylated tyrosine dipeptide (named 3-amino-5-[(4-hydroxyphenyl)methyl]-4,4-dimethyl-2-pyrrolidin-2-one or ADHP). This Mycobacterium tuberculosis (strain CDC 1551 / Oshkosh) protein is Mycofactocin precursor peptide peptidase (mftE).